The sequence spans 882 residues: Valine--tRNA ligase (882 aa).

Residues 52 to 62 carry the 'HIGH' region motif; that stretch reads PNVTGSLHMGH. The short motif at 539-543 is the 'KMSKS' region element; the sequence is KMSKS. Lysine 542 serves as a coordination point for ATP. Positions 816-882 form a coiled coil; that stretch reads IDVAAERRRL…RINARLAVLQ (67 aa).

It belongs to the class-I aminoacyl-tRNA synthetase family. ValS type 1 subfamily. As to quaternary structure, monomer.

The protein resides in the cytoplasm. The enzyme catalyses tRNA(Val) + L-valine + ATP = L-valyl-tRNA(Val) + AMP + diphosphate. Catalyzes the attachment of valine to tRNA(Val). As ValRS can inadvertently accommodate and process structurally similar amino acids such as threonine, to avoid such errors, it has a 'posttransfer' editing activity that hydrolyzes mischarged Thr-tRNA(Val) in a tRNA-dependent manner. This is Valine--tRNA ligase from Mycolicibacterium paratuberculosis (strain ATCC BAA-968 / K-10) (Mycobacterium paratuberculosis).